The sequence spans 172 residues: Large ribosomal subunit protein uL10 (172 aa).

Belongs to the universal ribosomal protein uL10 family. In terms of assembly, part of the ribosomal stalk of the 50S ribosomal subunit. The N-terminus interacts with L11 and the large rRNA to form the base of the stalk. The C-terminus forms an elongated spine to which L12 dimers bind in a sequential fashion forming a multimeric L10(L12)X complex.

Forms part of the ribosomal stalk, playing a central role in the interaction of the ribosome with GTP-bound translation factors. The sequence is that of Large ribosomal subunit protein uL10 from Francisella tularensis subsp. tularensis (strain FSC 198).